The chain runs to 58 residues: Large ribosomal subunit protein uL30 (58 aa).

It belongs to the universal ribosomal protein uL30 family. In terms of assembly, part of the 50S ribosomal subunit.

This Blochmanniella floridana protein is Large ribosomal subunit protein uL30.